The primary structure comprises 634 residues: MENTITSSTSSPKGRGVNFSTPRGFGSKFKSKCKETFFPDDPFKPISQEPNRLLKTKKLLEYFVPIFEWLPKYDMQKLKYDVLAGITITSLAVPQGISYAKLASIPPIIGLYSSFVPPFVYAVFGSSNNLAVGTVAACSLLIAETFGEEMIKNEPELYLHLIFTATLITGLFQFAMGFLRLGILVDFLSHSTITGFMGGTAIIILLQQLKGIFGLVHFTHKTDVVSVLHSILDNRAEWKWQSTLAGVCFLVFLQSTRYIKQRYPKLFWVSAMGPMVVVVVGCVVAYLVKGTAHGIATVGPLKKGLNPPSIQLLNFDSKYLGMVFKAGIVTGLIALAEGIAIGRSFAVMKNEQTDGNKEMIAFGLMNVIGSFTSCYLTTGPFSKTAVNYNAGTKTPMSNVVMGVCMMLVLLFLAPLFSYTPLVGLSAIIMSAMLGLINYEEMYHLFKVDKFDFLVCMSAFFGVSFLSMDYGLIISVGFSIVRALLYVARPSTCKLGRIPNSVMFRDIEQYPASEEMLGYIILQLGSPVFFANSTYVRERILRWIRDEPEAIEFLLLDLSGVSTIDMTGMETLLEIQRILGSKNIKMVIINPRFEVLEKMMLSHFVEKIGKEYMFLSIDDAVQACRFNLTTTKPEV.

The segment covering 1-12 (MENTITSSTSSP) has biased composition (polar residues). Positions 1-25 (MENTITSSTSSPKGRGVNFSTPRGF) are disordered. The Cytoplasmic segment spans residues 1-81 (MENTITSSTS…KYDMQKLKYD (81 aa)). A helical transmembrane segment spans residues 82 to 102 (VLAGITITSLAVPQGISYAKL). Residues 103–104 (AS) are Extracellular-facing. The helical transmembrane segment at 105 to 125 (IPPIIGLYSSFVPPFVYAVFG) threads the bilayer. The Cytoplasmic segment spans residues 126-130 (SSNNL). The helical transmembrane segment at 131 to 151 (AVGTVAACSLLIAETFGEEMI) threads the bilayer. At 152-158 (KNEPELY) the chain is on the extracellular side. The chain crosses the membrane as a helical span at residues 159–179 (LHLIFTATLITGLFQFAMGFL). The Cytoplasmic portion of the chain corresponds to 180–195 (RLGILVDFLSHSTITG). Residues 196-216 (FMGGTAIIILLQQLKGIFGLV) traverse the membrane as a helical segment. The Extracellular portion of the chain corresponds to 217–239 (HFTHKTDVVSVLHSILDNRAEWK). A helical membrane pass occupies residues 240–260 (WQSTLAGVCFLVFLQSTRYIK). Residues 261–265 (QRYPK) lie on the Cytoplasmic side of the membrane. The chain crosses the membrane as a helical span at residues 266 to 286 (LFWVSAMGPMVVVVVGCVVAY). The Extracellular segment spans residues 287-321 (LVKGTAHGIATVGPLKKGLNPPSIQLLNFDSKYLG). Residues 322–342 (MVFKAGIVTGLIALAEGIAIG) form a helical membrane-spanning segment. The Cytoplasmic portion of the chain corresponds to 343-358 (RSFAVMKNEQTDGNKE). Residues 359–379 (MIAFGLMNVIGSFTSCYLTTG) traverse the membrane as a helical segment. The Extracellular segment spans residues 380 to 395 (PFSKTAVNYNAGTKTP). The chain crosses the membrane as a helical span at residues 396-416 (MSNVVMGVCMMLVLLFLAPLF). Over 417 to 420 (SYTP) the chain is Cytoplasmic. The helical transmembrane segment at 421 to 441 (LVGLSAIIMSAMLGLINYEEM) threads the bilayer. Topologically, residues 442-458 (YHLFKVDKFDFLVCMSA) are extracellular. Residues 459–479 (FFGVSFLSMDYGLIISVGFSI) form a helical membrane-spanning segment. Topologically, residues 480–634 (VRALLYVARP…FNLTTTKPEV (155 aa)) are cytoplasmic. The STAS domain maps to 508–623 (QYPASEEMLG…LSIDDAVQAC (116 aa)).

Belongs to the SLC26A/SulP transporter (TC 2.A.53) family.

Its subcellular location is the membrane. H(+)/sulfate cotransporter that may play a role in the regulation of sulfate assimilation. This Arabidopsis thaliana (Mouse-ear cress) protein is Probable sulfate transporter 3.5 (SULTR3;5).